A 303-amino-acid polypeptide reads, in one-letter code: Acetaldehyde dehydrogenase (303 aa).

13–16 (SGNI) provides a ligand contact to NAD(+). Cys-128 acts as the Acyl-thioester intermediate in catalysis. NAD(+) is bound by residues 159–167 (SAGPGTRQN) and Asn-278.

It belongs to the acetaldehyde dehydrogenase family.

It carries out the reaction acetaldehyde + NAD(+) + CoA = acetyl-CoA + NADH + H(+). This is Acetaldehyde dehydrogenase from Chloroflexus aggregans (strain MD-66 / DSM 9485).